The primary structure comprises 298 residues: ATP synthase gamma chain (298 aa).

It belongs to the ATPase gamma chain family. As to quaternary structure, F-type ATPases have 2 components, CF(1) - the catalytic core - and CF(0) - the membrane proton channel. CF(1) has five subunits: alpha(3), beta(3), gamma(1), delta(1), epsilon(1). CF(0) has three main subunits: a, b and c.

It localises to the cell inner membrane. In terms of biological role, produces ATP from ADP in the presence of a proton gradient across the membrane. The gamma chain is believed to be important in regulating ATPase activity and the flow of protons through the CF(0) complex. The protein is ATP synthase gamma chain of Francisella tularensis subsp. holarctica (strain LVS).